Reading from the N-terminus, the 213-residue chain is Gas vesicle protein F (213 aa).

Belongs to the gas vesicle GvpF/GvpL family. As to quaternary structure, binds GvpA.

It is found in the gas vesicle. Its function is as follows. A minor component of the gas vesicle, may be involved in preventing GvpA aggregation during gas vesicle nucleation. Gas vesicles are hollow, gas filled proteinaceous nanostructures found in some microorganisms. They allow positioning of halobacteria at the optimal depth for growth in the poorly aerated, shallow brine pools of their habitat. Functionally, expression of a 9.5 kb mc-vac DNA fragment containing 2 divergently transcribed regions (gvpD-gvpE-gvpF-gvpG-gvpH-gvpI-gvpJ-gvpK-gvpL-gvpM and gvpA-gvpC-gvpN-gvpO) allows H.volcanii to produce gas vesicles. The chain is Gas vesicle protein F from Haloferax mediterranei (strain ATCC 33500 / DSM 1411 / JCM 8866 / NBRC 14739 / NCIMB 2177 / R-4) (Halobacterium mediterranei).